We begin with the raw amino-acid sequence, 851 residues long: Probable alpha,alpha-trehalose-phosphate synthase [UDP-forming] 7 (851 aa).

Phosphoserine is present on Ser-5. Phosphothreonine is present on Thr-32. The segment at 59–540 (DRMIIVANRL…SRSFLQDLER (482 aa)) is glycosyltransferase.

It in the N-terminal section; belongs to the glycosyltransferase 20 family. In the C-terminal section; belongs to the trehalose phosphatase family. As to quaternary structure, binds to the phosphopeptide-binding site of GRF/14-3-3. Post-translationally, phosphorylated. Expressed in seedlings, leaves, roots, stems, flowers and siliques.

The enzyme catalyses D-glucose 6-phosphate + UDP-alpha-D-glucose = alpha,alpha-trehalose 6-phosphate + UDP + H(+). In Arabidopsis thaliana (Mouse-ear cress), this protein is Probable alpha,alpha-trehalose-phosphate synthase [UDP-forming] 7 (TPS7).